A 288-amino-acid chain; its full sequence is Ankyrin repeat and SOCS box protein 8 (288 aa).

The residue at position 17 (Ser17) is a Phosphoserine. 4 ANK repeats span residues 52–81 (GTLK…EVNA), 85–113 (YNRT…NPNA), 117–146 (NRDT…SVNA), and 150–179 (NNDT…EVRV). One can recognise an SOCS box domain in the interval 235–288 (QLCEKLTVLCSAPGTLKTLSRYAVRRSLGLQYLPDAVKGLPLPASLKEYLLLIE).

This sequence belongs to the ankyrin SOCS box (ASB) family. Interacts with TBK1; this interaction promotes TBK1 proteasomal degradation. In terms of processing, phosphorylated by TBK1.

The protein localises to the cytoplasm. It participates in protein modification; protein ubiquitination. Functionally, may be a substrate-recognition component of a SCF-like ECS (Elongin-Cullin-SOCS-box protein) E3 ubiquitin-protein ligase complex which mediates the ubiquitination and subsequent proteasomal degradation of target proteins. Inhibits IFN-beta production through the IRF3 signaling pathway by targeting TBK1 via 'Lys-48'-linked ubiquitination, leading to its proteasomal degradation. This is Ankyrin repeat and SOCS box protein 8 (ASB8) from Bos taurus (Bovine).